We begin with the raw amino-acid sequence, 198 residues long: Recombination protein RecR (198 aa).

A C4-type zinc finger spans residues 57 to 72 (CSLCGNLDTVDPCHIC). The region spanning 80-175 (GLICVVETVG…TVTRVGHGVP (96 aa)) is the Toprim domain.

It belongs to the RecR family.

May play a role in DNA repair. It seems to be involved in an RecBC-independent recombinational process of DNA repair. It may act with RecF and RecO. This is Recombination protein RecR from Gluconobacter oxydans (strain 621H) (Gluconobacter suboxydans).